The following is a 569-amino-acid chain: Proline--tRNA ligase (569 aa).

The protein belongs to the class-II aminoacyl-tRNA synthetase family. ProS type 1 subfamily. Homodimer.

The protein localises to the cytoplasm. The enzyme catalyses tRNA(Pro) + L-proline + ATP = L-prolyl-tRNA(Pro) + AMP + diphosphate. Its function is as follows. Catalyzes the attachment of proline to tRNA(Pro) in a two-step reaction: proline is first activated by ATP to form Pro-AMP and then transferred to the acceptor end of tRNA(Pro). As ProRS can inadvertently accommodate and process non-cognate amino acids such as alanine and cysteine, to avoid such errors it has two additional distinct editing activities against alanine. One activity is designated as 'pretransfer' editing and involves the tRNA(Pro)-independent hydrolysis of activated Ala-AMP. The other activity is designated 'posttransfer' editing and involves deacylation of mischarged Ala-tRNA(Pro). The misacylated Cys-tRNA(Pro) is not edited by ProRS. In Legionella pneumophila (strain Corby), this protein is Proline--tRNA ligase.